A 189-amino-acid chain; its full sequence is Interferon alpha-A (189 aa).

An N-terminal signal peptide occupies residues 1-23 (MAPAWSFLLSLLLLSCNAICSLG). Intrachain disulfides connect Cys-24–Cys-122 and Cys-52–Cys-162.

Belongs to the alpha/beta interferon family.

The protein localises to the secreted. Its function is as follows. Produced by macrophages, IFN-alpha have antiviral activities. Interferon stimulates the production of two enzymes: a protein kinase and an oligoadenylate synthetase. This Bos taurus (Bovine) protein is Interferon alpha-A (IFNAA).